Consider the following 401-residue polypeptide: Glucose/mannose transporter GlcP (401 aa).

Helical transmembrane passes span 11-31 (AFFFTVGIIHISTGSLTPFLL), 43-63 (VIIFFQFTGFLSGVLIAPLMI), 78-98 (IMLVALSIFFLTKDWYYIIVM), 99-119 (AFLLGYGAGTLETTVGSFVIA), 132-152 (EVLFGLGALSFPLLINSFIDI), 156-176 (FLPYYCIFTFLFVLFVGWLIF), 212-232 (LGFFVFFAFLYAGIETNFANF), 247-267 (LISVSFFWVGIIIGRILIGFV), 278-298 (LFSCSCLIVLLIAFSYISNPI), 306-326 (LIGLSIAGIFPIALTLASIII), 336-356 (LFIASASFGGAIISFLIGWSL), and 360-380 (TILLTMGIFTTMAVILVGISV).

It belongs to the major facilitator superfamily.

Its subcellular location is the cell membrane. Can transport glucose, mannose, 2-deoxyglucose and methyl alpha-glucoside, but not galactose. The sequence is that of Glucose/mannose transporter GlcP (glcP) from Bacillus subtilis (strain 168).